A 148-amino-acid polypeptide reads, in one-letter code: Nucleoside diphosphate kinase 1 (148 aa).

ATP is bound by residues Lys-9, Phe-57, Arg-85, Thr-91, Arg-102, and Asn-112. His-115 (pros-phosphohistidine intermediate) is an active-site residue.

It belongs to the NDK family. Requires Mg(2+) as cofactor.

The enzyme catalyses a 2'-deoxyribonucleoside 5'-diphosphate + ATP = a 2'-deoxyribonucleoside 5'-triphosphate + ADP. It catalyses the reaction a ribonucleoside 5'-diphosphate + ATP = a ribonucleoside 5'-triphosphate + ADP. Major role in the synthesis of nucleoside triphosphates other than ATP. The ATP gamma phosphate is transferred to the NDP beta phosphate via a ping-pong mechanism, using a phosphorylated active-site intermediate. The chain is Nucleoside diphosphate kinase 1 (NDKP1) from Mesembryanthemum crystallinum (Common ice plant).